We begin with the raw amino-acid sequence, 757 residues long: Polyribonucleotide nucleotidyltransferase (757 aa).

Mg(2+)-binding residues include D488 and D494. The KH domain occupies 555–614 (PKLYTMKINAEKIRDVIGKGGAVIRALTEETGCQINIEEDGTITIAATDAAKADIAKRRI). One can recognise an S1 motif domain in the interval 624-692 (GKIYEGPVTK…ERGRVKLSMK (69 aa)). Residues 693 to 757 (VLAERPAPGS…ADTGSGQRVG (65 aa)) form a disordered region. Over residues 720 to 736 (ALAEREPRREMRDHGHP) the composition is skewed to basic and acidic residues. The span at 737–747 (PSEQQQQQSPP) shows a compositional bias: low complexity.

It belongs to the polyribonucleotide nucleotidyltransferase family. Mg(2+) is required as a cofactor.

It localises to the cytoplasm. The catalysed reaction is RNA(n+1) + phosphate = RNA(n) + a ribonucleoside 5'-diphosphate. Its function is as follows. Involved in mRNA degradation. Catalyzes the phosphorolysis of single-stranded polyribonucleotides processively in the 3'- to 5'-direction. The chain is Polyribonucleotide nucleotidyltransferase from Verminephrobacter eiseniae (strain EF01-2).